The primary structure comprises 209 residues: Large ribosomal subunit protein uL1 (209 aa).

This sequence belongs to the universal ribosomal protein uL1 family. As to quaternary structure, part of the 50S ribosomal subunit.

Binds directly to 23S rRNA. The L1 stalk is quite mobile in the ribosome, and is involved in E site tRNA release. In terms of biological role, protein L1 is also a translational repressor protein, it controls the translation of the L11 operon by binding to its mRNA. The polypeptide is Large ribosomal subunit protein uL1 (rplA) (Neorickettsia sennetsu (strain ATCC VR-367 / Miyayama) (Ehrlichia sennetsu)).